The chain runs to 399 residues: Large envelope protein (399 aa).

Met1 is modified (N-acetylmethionine). Residue Gly2 is the site of N-myristoyl glycine; by host attachment. The pre-S1 stretch occupies residues 2 to 118; it reads GLSWTVPLEW…PPLRDTHPQA (117 aa). The segment at 2 to 173 is pre-S; sequence GLSWTVPLEW…FSRIGDPAPN (172 aa). Residues 2–180 lie on the Virion surface; in external conformation side of the membrane; the sequence is GLSWTVPLEW…APNMEGITSG (179 aa). The Intravirion; in internal conformation portion of the chain corresponds to 2–252; sequence GLSWTVPLEW…PGYRWMCLRR (251 aa). Ser4 is a glycosylation site (N-linked (GlcNAc...) asparagine). A disordered region spans residues 85–109; it reads KTLPADPPPASTNRQSGRQPTPITP. Residues 95–105 show a composition bias toward polar residues; sequence STNRQSGRQPT. A pre-S2 region spans residues 119–173; sequence MQWNSTTFHQALQDPRVRGLYFPAGGSSSGTVNPVPTTASLISSIFSRIGDPAPN. A helical membrane pass occupies residues 181 to 201; sequence FLGPLLVLQAGFFLLTKILTI. Residues 202 to 252 are Intravirion; in external conformation-facing; the sequence is PQSLDSWWTSLNFLGGAPVCLGQNSQSPTSNHSPTSCPPICPGYRWMCLRR. The helical transmembrane segment at 253–273 threads the bilayer; that stretch reads FIIFLFILLLCLIFLLVLLGY. The Virion surface segment spans residues 274-347; the sequence is QGMLPVCPLI…WASARFSWLS (74 aa). A glycan (N-linked (GlcNAc...) asparagine; by host) is linked at Asn319. The chain crosses the membrane as a helical span at residues 348 to 368; sequence LLVPFVQWFAGLSPTVWLSVI. Over 369 to 374 the chain is Intravirion; the sequence is WMMWYW. The chain crosses the membrane as a helical span at residues 375–397; that stretch reads GPSLYNILSPFIPLLPIFFCLWV. Residues 398-399 lie on the Virion surface side of the membrane; sequence YI.

This sequence belongs to the orthohepadnavirus major surface antigen family. As to quaternary structure, in its internal form (Li-HBsAg), interacts with the capsid protein and with the isoform S. Interacts with host chaperone CANX. In terms of assembly, associates with host chaperone CANX through its pre-S2 N glycan; this association may be essential for isoform M proper secretion. Interacts with isoform L. Interacts with the antigens of satellite virus HDV (HDVAgs); this interaction is required for encapsidation of HDV genomic RNA. In terms of processing, isoform M is N-terminally acetylated by host at a ratio of 90%, and N-glycosylated by host at the pre-S2 region. Post-translationally, myristoylated.

Its subcellular location is the virion membrane. Its function is as follows. The large envelope protein exists in two topological conformations, one which is termed 'external' or Le-HBsAg and the other 'internal' or Li-HBsAg. In its external conformation the protein attaches the virus to cell receptors and thereby initiating infection. This interaction determines the species specificity and liver tropism. This attachment induces virion internalization predominantly through caveolin-mediated endocytosis. The large envelope protein also assures fusion between virion membrane and endosomal membrane. In its internal conformation the protein plays a role in virion morphogenesis and mediates the contact with the nucleocapsid like a matrix protein. Functionally, the middle envelope protein plays an important role in the budding of the virion. It is involved in the induction of budding in a nucleocapsid independent way. In this process the majority of envelope proteins bud to form subviral lipoprotein particles of 22 nm of diameter that do not contain a nucleocapsid. This is Large envelope protein from Hepatitis B virus genotype E (isolate Cote d'Ivoire/ABI-129/2003) (HBV-E).